A 181-amino-acid polypeptide reads, in one-letter code: TATA-box-binding protein (181 aa).

2 repeat units span residues 7-83 and 98-173.

It belongs to the TBP family.

In terms of biological role, general factor that plays a role in the activation of archaeal genes transcribed by RNA polymerase. Binds specifically to the TATA box promoter element which lies close to the position of transcription initiation. This chain is TATA-box-binding protein, found in Methanococcus aeolicus (strain ATCC BAA-1280 / DSM 17508 / OCM 812 / Nankai-3).